Consider the following 679-residue polypeptide: MSKNLLIELGLEELPAYVVTPSEKQLGERLATFLTENRLSFEDIQTFSTPRRLAVRVSGLADQQTDLTEDFKGPAKKIALDADGNFSKAAQGFVRGKGLTTDAIEFREVKGEEYVYVTKHEAGKPAKEVLLGVTEVLSAMTFPVSMHWANNSFEYIRPVHTLTVLLNDEALELDFLDIHSGCVSRGHRFLGTETTITSADSYEADLRSQCVIVDAKERQEMIVEQIKTLEVEQGVQVDIDENLLNEVLNLVEFPTAFMGSFEAKYLDIPEEVLVTSMKNHQRYFVVRDQAGHLMPNFVSVRNGNDQAIENVIKGNEKVLVARLEDGEFFWREDQKLQIADLVAKLTNVTFHEKIGSLAEHMDRTRVIAASLAKEANLSAEEVTAVDRAAQIYKFDLLTGMVGEFDELQGIMGEKYALLAGEDAAVATAIREHYLPDAAGGALPETKVGAVLALADKLDTLLSFFSVGLIPSGSNDPYALRRATQGIVRILDHFGWRIPMDKLVDSLYDLSFDSLTYTNKADVMNFIRARVDKMMGKAAPKDIREAILASSTFVVPEMLAVAEALVKASHTENYKPAVESLSRAFNLAEKADASVQVDPSLFENEQENTLFAAIQGLTLAGSAAQQLEQVFALSPVINDFFDNTMVMAEDQALKNNRLAILSDLVSKAKTIAAFNQLNTK.

Belongs to the class-II aminoacyl-tRNA synthetase family. In terms of assembly, tetramer of two alpha and two beta subunits.

Its subcellular location is the cytoplasm. It catalyses the reaction tRNA(Gly) + glycine + ATP = glycyl-tRNA(Gly) + AMP + diphosphate. This chain is Glycine--tRNA ligase beta subunit, found in Streptococcus pyogenes serotype M2 (strain MGAS10270).